A 212-amino-acid polypeptide reads, in one-letter code: Octanoyltransferase (212 aa).

Positions A31–I209 constitute a BPL/LPL catalytic domain. Substrate is bound by residues R70–H77, S138–G140, and G151–A153. C169 (acyl-thioester intermediate) is an active-site residue.

The protein belongs to the LipB family.

The protein localises to the cytoplasm. The catalysed reaction is octanoyl-[ACP] + L-lysyl-[protein] = N(6)-octanoyl-L-lysyl-[protein] + holo-[ACP] + H(+). The protein operates within protein modification; protein lipoylation via endogenous pathway; protein N(6)-(lipoyl)lysine from octanoyl-[acyl-carrier-protein]: step 1/2. In terms of biological role, catalyzes the transfer of endogenously produced octanoic acid from octanoyl-acyl-carrier-protein onto the lipoyl domains of lipoate-dependent enzymes. Lipoyl-ACP can also act as a substrate although octanoyl-ACP is likely to be the physiological substrate. The sequence is that of Octanoyltransferase from Haemophilus influenzae (strain PittEE).